A 93-amino-acid polypeptide reads, in one-letter code: Exodeoxyribonuclease 7 small subunit (93 aa).

The tract at residues 1 to 22 is disordered; that stretch reads MAKTASPGATPPGNGAEPLPDN.

Belongs to the XseB family. As to quaternary structure, heterooligomer composed of large and small subunits.

It is found in the cytoplasm. It catalyses the reaction Exonucleolytic cleavage in either 5'- to 3'- or 3'- to 5'-direction to yield nucleoside 5'-phosphates.. In terms of biological role, bidirectionally degrades single-stranded DNA into large acid-insoluble oligonucleotides, which are then degraded further into small acid-soluble oligonucleotides. In Burkholderia multivorans (strain ATCC 17616 / 249), this protein is Exodeoxyribonuclease 7 small subunit.